We begin with the raw amino-acid sequence, 448 residues long: Adenylosuccinate synthetase (448 aa).

Residues Gly-22–Lys-28 and Gly-50–Thr-52 each bind GTP. Asp-23 acts as the Proton acceptor in catalysis. Mg(2+) contacts are provided by Asp-23 and Gly-50. IMP is bound by residues Asp-23–Lys-26, Asn-48–His-51, Thr-139, Arg-153, Gln-234, Thr-249, and Arg-321. His-51 acts as the Proton donor in catalysis. Position 317–323 (Ser-317–Arg-323) interacts with substrate. GTP is bound by residues Arg-323, Lys-349–Asp-351, and Ser-431–Gly-433.

The protein belongs to the adenylosuccinate synthetase family. As to quaternary structure, homodimer. Requires Mg(2+) as cofactor.

Its subcellular location is the cytoplasm. It catalyses the reaction IMP + L-aspartate + GTP = N(6)-(1,2-dicarboxyethyl)-AMP + GDP + phosphate + 2 H(+). Its pathway is purine metabolism; AMP biosynthesis via de novo pathway; AMP from IMP: step 1/2. Plays an important role in the de novo pathway of purine nucleotide biosynthesis. Catalyzes the first committed step in the biosynthesis of AMP from IMP. In Paraburkholderia phymatum (strain DSM 17167 / CIP 108236 / LMG 21445 / STM815) (Burkholderia phymatum), this protein is Adenylosuccinate synthetase.